The following is a 462-amino-acid chain: 3-isopropylmalate dehydratase large subunit (462 aa).

3 residues coordinate [4Fe-4S] cluster: Cys-337, Cys-397, and Cys-400.

It belongs to the aconitase/IPM isomerase family. LeuC type 1 subfamily. As to quaternary structure, heterodimer of LeuC and LeuD. The cofactor is [4Fe-4S] cluster.

It catalyses the reaction (2R,3S)-3-isopropylmalate = (2S)-2-isopropylmalate. It participates in amino-acid biosynthesis; L-leucine biosynthesis; L-leucine from 3-methyl-2-oxobutanoate: step 2/4. In terms of biological role, catalyzes the isomerization between 2-isopropylmalate and 3-isopropylmalate, via the formation of 2-isopropylmaleate. The sequence is that of 3-isopropylmalate dehydratase large subunit from Listeria monocytogenes serotype 4b (strain CLIP80459).